Reading from the N-terminus, the 259-residue chain is Small ribosomal subunit protein uS2 (259 aa).

This sequence belongs to the universal ribosomal protein uS2 family.

This is Small ribosomal subunit protein uS2 from Streptococcus pneumoniae serotype 2 (strain D39 / NCTC 7466).